Reading from the N-terminus, the 210-residue chain is Na(+)-translocating NADH-quinone reductase subunit D (210 aa).

The next 6 membrane-spanning stretches (helical) occupy residues 10 to 30, 42 to 62, 72 to 92, 103 to 123, 131 to 151, and 178 to 198; these read ILFAPFLDNNPIALQVLGVCS, FVMTLAVMFVTAFSNLFVSLI, IIVQMAIIASLVIVVDQVLKA, VFVGLIITNCIVMGRAEAYAM, FIDGVGNGLGYGFVLITVAFF, and NGLMLLAPSAFFLIGFMIWAI.

It belongs to the NqrDE/RnfAE family. In terms of assembly, composed of six subunits; NqrA, NqrB, NqrC, NqrD, NqrE and NqrF.

The protein localises to the cell inner membrane. The enzyme catalyses a ubiquinone + n Na(+)(in) + NADH + H(+) = a ubiquinol + n Na(+)(out) + NAD(+). In terms of biological role, NQR complex catalyzes the reduction of ubiquinone-1 to ubiquinol by two successive reactions, coupled with the transport of Na(+) ions from the cytoplasm to the periplasm. NqrA to NqrE are probably involved in the second step, the conversion of ubisemiquinone to ubiquinol. The sequence is that of Na(+)-translocating NADH-quinone reductase subunit D from Photobacterium profundum (strain SS9).